Consider the following 305-residue polypeptide: Testis-expressed protein 52 (305 aa).

The tract at residues 284 to 305 is disordered; the sequence is HLSKAQASKSPARKRKRRPGHF. Positions 294–305 are enriched in basic residues; it reads PARKRKRRPGHF.

In terms of tissue distribution, expressed in Testis.

This chain is Testis-expressed protein 52, found in Homo sapiens (Human).